The chain runs to 201 residues: 3-isopropylmalate dehydratase small subunit (201 aa).

Belongs to the LeuD family. LeuD type 1 subfamily. As to quaternary structure, heterodimer of LeuC and LeuD.

It catalyses the reaction (2R,3S)-3-isopropylmalate = (2S)-2-isopropylmalate. It participates in amino-acid biosynthesis; L-leucine biosynthesis; L-leucine from 3-methyl-2-oxobutanoate: step 2/4. Catalyzes the isomerization between 2-isopropylmalate and 3-isopropylmalate, via the formation of 2-isopropylmaleate. The protein is 3-isopropylmalate dehydratase small subunit of Rhodopseudomonas palustris (strain ATCC BAA-98 / CGA009).